The chain runs to 256 residues: Flap endonuclease Xni (256 aa).

A Mg(2+)-binding site is contributed by Asp-105. A 5'-3' exonuclease domain is found at 163-256 (RSQLIDYLAL…QFRIKKPDSE (94 aa)). The K(+) site is built by Leu-172, Ala-173, Pro-181, Val-183, and Ile-186. Positions 185–190 (GIGPKS) are interaction with DNA.

This sequence belongs to the Xni family. The cofactor is Mg(2+). K(+) serves as cofactor.

Has flap endonuclease activity. During DNA replication, flap endonucleases cleave the 5'-overhanging flap structure that is generated by displacement synthesis when DNA polymerase encounters the 5'-end of a downstream Okazaki fragment. The protein is Flap endonuclease Xni of Shewanella pealeana (strain ATCC 700345 / ANG-SQ1).